Consider the following 185-residue polypeptide: Large ribosomal subunit protein uL5 (185 aa).

It belongs to the universal ribosomal protein uL5 family. Part of the 50S ribosomal subunit; part of the 5S rRNA/L5/L18/L25 subcomplex. Contacts the 5S rRNA and the P site tRNA. Forms a bridge to the 30S subunit in the 70S ribosome.

Its function is as follows. This is one of the proteins that bind and probably mediate the attachment of the 5S RNA into the large ribosomal subunit, where it forms part of the central protuberance. In the 70S ribosome it contacts protein S13 of the 30S subunit (bridge B1b), connecting the 2 subunits; this bridge is implicated in subunit movement. Contacts the P site tRNA; the 5S rRNA and some of its associated proteins might help stabilize positioning of ribosome-bound tRNAs. The polypeptide is Large ribosomal subunit protein uL5 (Afipia carboxidovorans (strain ATCC 49405 / DSM 1227 / KCTC 32145 / OM5) (Oligotropha carboxidovorans)).